The sequence spans 291 residues: tRNA U34 carboxymethyltransferase (291 aa).

Carboxy-S-adenosyl-L-methionine-binding positions include Lys-61, Trp-75, Lys-80, Gly-100, 122-124 (DPS), Tyr-169, and Arg-284.

It belongs to the class I-like SAM-binding methyltransferase superfamily. CmoB family. As to quaternary structure, homotetramer.

It carries out the reaction carboxy-S-adenosyl-L-methionine + 5-hydroxyuridine(34) in tRNA = 5-carboxymethoxyuridine(34) in tRNA + S-adenosyl-L-homocysteine + H(+). In terms of biological role, catalyzes carboxymethyl transfer from carboxy-S-adenosyl-L-methionine (Cx-SAM) to 5-hydroxyuridine (ho5U) to form 5-carboxymethoxyuridine (cmo5U) at position 34 in tRNAs. The polypeptide is tRNA U34 carboxymethyltransferase (Campylobacter lari (strain RM2100 / D67 / ATCC BAA-1060)).